The sequence spans 353 residues: Immune-associated nucleotide-binding protein 8 (353 aa).

Residues 1 to 10 (MANDQKNSES) are compositionally biased toward polar residues. A disordered region spans residues 1-43 (MANDQKNSESFPAKEDHKKDDAAAPAEVDHKDEFSASQPHPVE). Positions 12–34 (PAKEDHKKDDAAAPAEVDHKDEF) are enriched in basic and acidic residues. Residues 40–248 (HPVENIVLVG…YTDEMYHMIK (209 aa)) form the AIG1-type G domain. The tract at residues 49–56 (GRTGNGKS) is G1. GTP contacts are provided by residues 49-57 (GRTGNGKSA) and Ser70. Positions 76 to 80 (GVTME) are G2. Positions 98 to 101 (DTPG) are G3. The segment at 168-171 (TGGD) is G4. Residues 207 to 209 (DNK) are G5. GTP is bound at residue Asn208. Residues 244-291 (YHMIKEENERHKKEQEELESKGHSEEQLAALMKELQIMNERNLKAMAE) adopt a coiled-coil conformation.

The protein belongs to the TRAFAC class TrmE-Era-EngA-EngB-Septin-like GTPase superfamily. AIG1/Toc34/Toc159-like paraseptin GTPase family. IAN subfamily. Mainly expressed in leaves.

This chain is Immune-associated nucleotide-binding protein 8, found in Arabidopsis thaliana (Mouse-ear cress).